The chain runs to 371 residues: MDYDLIVIGSGSVGSAAGYYASQAGLNVLMIDSAMPPHQAGSHHGETRIMRHAYGEGEKYVPLVLRAQALWDQLAAQTGEKLFQACGVINLGPDNSTFLQNVQRSAQQYDLPVETLNSTQIREKWPVFTVPDNYIAVFEPQSGYLRSELAVKTLIKAVTEAGCGILFNCPVTAIESHQAGVDVVTIDGTYSATKVVVTAGTWVKELLPTLPVTPVRKVFSWHQADGRYSEANHFPAFTVEMPDNILYYGFPAQNDALKLGKHHGGQLIESAAQRKPFGRYAEDGTEVFSFLRHFLPGVGVCLRGEACSYDMSPDEDFIIDTLPEDERVMVVSGLSGHGFKFATALGEVAALFAQDKPSPIDISAFSLARFR.

Aspartate 4–alanine 34 lines the FAD pocket. The residue at position 307 (cysteine 307) is an S-8alpha-FAD cysteine.

Belongs to the MSOX/MTOX family. MTOX subfamily. Monomer. The cofactor is FAD.

The enzyme catalyses N(alpha)-methyl-L-tryptophan + O2 + H2O = L-tryptophan + formaldehyde + H2O2. Catalyzes the oxidative demethylation of N-methyl-L-tryptophan. This Yersinia pseudotuberculosis serotype O:1b (strain IP 31758) protein is N-methyl-L-tryptophan oxidase.